The primary structure comprises 296 residues: Fructose-bisphosphate aldolase class 1 (296 aa).

The active-site Proton acceptor is the E175. The active-site Schiff-base intermediate with dihydroxyacetone-P is the K212.

It belongs to the class I fructose-bisphosphate aldolase family.

It carries out the reaction beta-D-fructose 1,6-bisphosphate = D-glyceraldehyde 3-phosphate + dihydroxyacetone phosphate. It functions in the pathway carbohydrate degradation; glycolysis; D-glyceraldehyde 3-phosphate and glycerone phosphate from D-glucose: step 4/4. This chain is Fructose-bisphosphate aldolase class 1 (fda), found in Staphylococcus carnosus (strain TM300).